The following is a 374-amino-acid chain: uncharacterized protein (374 aa).

The helical transmembrane segment at 27–49 (AISPILALLIVLGVTIVVGAVFY) threads the bilayer.

Its subcellular location is the membrane. This is an uncharacterized protein from Methanocaldococcus jannaschii (strain ATCC 43067 / DSM 2661 / JAL-1 / JCM 10045 / NBRC 100440) (Methanococcus jannaschii).